Here is a 106-residue protein sequence, read N- to C-terminus: UPF0145 protein FTL_1249 (106 aa).

This sequence belongs to the UPF0145 family.

This Francisella tularensis subsp. holarctica (strain LVS) protein is UPF0145 protein FTL_1249.